Here is a 449-residue protein sequence, read N- to C-terminus: Dolichyl-diphosphooligosaccharide--protein glycosyltransferase 48 kDa subunit (449 aa).

Residues 1–18 form the signal peptide; the sequence is MMWKALLIAVLAIAHCQA. Topologically, residues 19–412 are lumenal; it reads VLETDANTLV…ERFIPSAFPY (394 aa). The chain crosses the membrane as a helical span at residues 413-433; the sequence is YTSAFSMMIGVFVFSFVFLHF. Over 434-449 the chain is Cytoplasmic; that stretch reads KDEPVGRAAKEDKKSQ.

The protein belongs to the DDOST 48 kDa subunit family. In terms of assembly, component of the oligosaccharyltransferase (OST) complex.

It is found in the endoplasmic reticulum membrane. Its pathway is protein modification; protein glycosylation. Its function is as follows. Subunit of the oligosaccharyl transferase (OST) complex that catalyzes the initial transfer of a defined glycan (Glc(3)Man(9)GlcNAc(2) in eukaryotes) from the lipid carrier dolichol-pyrophosphate to an asparagine residue within an Asn-X-Ser/Thr consensus motif in nascent polypeptide chains, the first step in protein N-glycosylation. N-glycosylation occurs cotranslationally and the complex associates with the Sec61 complex at the channel-forming translocon complex that mediates protein translocation across the endoplasmic reticulum (ER). All subunits are required for a maximal enzyme activity. Required for the assembly of both SST3A- and SS3B-containing OST complexes. The chain is Dolichyl-diphosphooligosaccharide--protein glycosyltransferase 48 kDa subunit (Ost48) from Drosophila melanogaster (Fruit fly).